A 123-amino-acid polypeptide reads, in one-letter code: Defensin beta 118 (123 aa).

The first 19 residues, 1–19 (MKLLLLALPMLVLLPQVIP), serve as a signal peptide directing secretion. Intrachain disulfides connect Cys-27–Cys-54, Cys-34–Cys-48, and Cys-38–Cys-55. 2 disordered regions span residues 59–79 (NEDHRQVPTTSPTPLSDSTPG) and 102–123 (MVEESEAGWGTQTSLPDVHHSS). Positions 64–123 (QVPTTSPTPLSDSTPGSIDDILTVRFTTDYFEVSSKKDMVEESEAGWGTQTSLPDVHHSS) are excised as a propeptide. The segment covering 66-79 (PTTSPTPLSDSTPG) has biased composition (low complexity).

Belongs to the beta-defensin family. Post-translationally, the three-dimensional structure formed by the three intramolecular disulfide bridges is indispensable for antimicrobial activity.

The protein localises to the secreted. In terms of biological role, host defense peptide that exhibits antimicrobial activity against both Gram-negative bacteria, such as E.coli and S.typhimurium, and Gram-positive bacteria, such as S.aureus and B.subtilis. Inhibits cell adhesion of E.coli on intestinal epithelial enterocytes. Causes rapid permeabilization of both the outer and inner membrane of E.coli, leading to morphological alterations on the bacterial surface. Binds to bacterial lipopolysaccharides (LPS) with high affinity, and may thereby be involved in immunoregulation through LPS neutralization. May contribute to epididymal innate immunity and protect the sperm against attack by microorganisms. The polypeptide is Defensin beta 118 (DEFB118) (Hylobates lar (Lar gibbon)).